Here is a 46-residue protein sequence, read N- to C-terminus: Large ribosomal subunit protein bL34 (46 aa).

It belongs to the bacterial ribosomal protein bL34 family.

The polypeptide is Large ribosomal subunit protein bL34 (Synechococcus sp. (strain JA-2-3B'a(2-13)) (Cyanobacteria bacterium Yellowstone B-Prime)).